The sequence spans 427 residues: Large ribosomal subunit protein uL4 (427 aa).

The residue at position 2 (Ala2) is an N-acetylalanine. Residue Lys14 is modified to N6-acetyllysine. Arg97 carries the post-translational modification Omega-N-methylarginine. The residue at position 106 (Lys106) is an N6-acetyllysine. Residue Lys239 forms a Glycyl lysine isopeptide (Lys-Gly) (interchain with G-Cter in SUMO2) linkage. Lys259 carries the N6-acetyllysine modification. A Phosphothreonine modification is found at Thr266. A phosphoserine mark is found at Ser290 and Ser295. The residue at position 300 (Arg300) is a Citrulline. Lys327 is covalently cross-linked (Glycyl lysine isopeptide (Lys-Gly) (interchain with G-Cter in SUMO2)). Residues Lys333 and Lys353 each carry the N6-acetyllysine modification. An N6-acetyllysine; alternate modification is found at Lys364. Residue Lys364 forms a Glycyl lysine isopeptide (Lys-Gly) (interchain with G-Cter in SUMO1); alternate linkage. Ser365 bears the Phosphoserine mark. A disordered region spans residues 369–427; it reads AAVAGKKPVVGKKGKKAAVGVKKQKKPLVGKKAAATKKPAPEKKPAEKKPTTEEKKPAA. The segment covering 377–397 has biased composition (basic residues); the sequence is VVGKKGKKAAVGVKKQKKPLV. Over residues 407 to 427 the composition is skewed to basic and acidic residues; it reads PAPEKKPAEKKPTTEEKKPAA.

This sequence belongs to the universal ribosomal protein uL4 family. In terms of assembly, component of the large ribosomal subunit. May bind IPO9 with low affinity. Interacts with RBM3. In terms of processing, citrullinated by PADI4.

It localises to the cytoplasm. In terms of biological role, component of the large ribosomal subunit. The ribosome is a large ribonucleoprotein complex responsible for the synthesis of proteins in the cell. The protein is Large ribosomal subunit protein uL4 (RPL4) of Homo sapiens (Human).